A 693-amino-acid polypeptide reads, in one-letter code: Putative tyrosinase-like protein tyr-3 (693 aa).

Residues 1-18 (MIRYIILLVYFLIFEVNS) form the signal peptide. 6 residues coordinate Cu cation: His142, His152, His161, His281, His285, and His308. 4 consecutive ShKT domains span residues 472 to 506 (CFNE…CRQC), 516 to 550 (CSDR…CQKC), 591 to 625 (CYNE…CGVC), and 634 to 667 (CADY…CNTC). 12 cysteine pairs are disulfide-bonded: Cys472–Cys506, Cys479–Cys499, Cys488–Cys503, Cys516–Cys550, Cys523–Cys543, Cys532–Cys547, Cys591–Cys625, Cys598–Cys618, Cys607–Cys622, Cys634–Cys667, Cys641–Cys660, and Cys650–Cys664.

The protein belongs to the tyrosinase family. Requires Cu(2+) as cofactor.

The protein is Putative tyrosinase-like protein tyr-3 (tyr-3) of Caenorhabditis elegans.